Here is an 88-residue protein sequence, read N- to C-terminus: Alpha-latrotoxin associated low molecular weight protein 2 (88 aa).

An N-terminal signal peptide occupies residues Met1–Gly19. Disulfide bonds link Cys30–Cys66, Cys46–Cys62, and Cys49–Cys75.

Belongs to the arthropod CHH/MIH/GIH/VIH hormone family. As to expression, expressed by the venom gland.

It localises to the secreted. May increase the toxicity of alpha-latrotoxin and/or other venom components. Is non-toxic to mice and to the cockroach Periplaneta americana. In Latrodectus geometricus (Brown widow spider), this protein is Alpha-latrotoxin associated low molecular weight protein 2.